The chain runs to 236 residues: ASEDGGRGPYVQADLAYAYEHITHDYPKPTDPSKGKISTVSDYFRNIRTHSIHPRVSVGYDFGGWRIAADYARYRKWSDNKYSVSIKNMRVHKHNSNRKNLKTENQENGSFHAVSSLGLSAIYDFQINDKFKPYIGARVAYGHVRHSIDSTKKITGLLTTSTPGIMSGVYKVLRTPGAHRESDSIRRVGLGVIAGVGFDITPKLTLDAGYRYHNWGRLENTRFKTHEASLGVRYRF.

Residue A1 is a signal peptide.

Belongs to the opacity porin family.

Its subcellular location is the cell outer membrane. Its function is as follows. Implicated in a number of adherence functions. OPA proteins are implicated in pathogenesis and are subject to phase variation. This Neisseria gonorrhoeae protein is Opacity protein opA50 (opaC).